Consider the following 114-residue polypeptide: Notch-regulated ankyrin repeat-containing protein (114 aa).

ANK repeat units lie at residues 50–79 (EGQTALHQSVIDGNLELVKLLVKFGADIRL) and 83–112 (DGWSALHIAAYGGHQDIVLYLITKAKYSSS).

It belongs to the NRARP family. As to quaternary structure, forms a ternary complex with the intracellular domain (ICD) of notch1 and rbpj/suh.

Functionally, promotes loss of intracellular domain (ICD) of Notch1 in embryos. By down-regulating ICD levels, could function as a negative feedback regulator of Notch signaling that attenuates ICD-mediated transcription. Involved in angiogenesis. May be involved in somitogenesis. The polypeptide is Notch-regulated ankyrin repeat-containing protein (nrarp) (Xenopus tropicalis (Western clawed frog)).